We begin with the raw amino-acid sequence, 70 residues long: Putative membrane protein insertion efficiency factor (70 aa).

This sequence belongs to the UPF0161 family.

It localises to the cell inner membrane. In terms of biological role, could be involved in insertion of integral membrane proteins into the membrane. This Methylobacillus flagellatus (strain ATCC 51484 / DSM 6875 / VKM B-1610 / KT) protein is Putative membrane protein insertion efficiency factor.